We begin with the raw amino-acid sequence, 157 residues long: Heat shock protein beta-9 (157 aa).

A compositionally biased stretch (low complexity) spans 1-17 (MQRVGSSLPSGSQSASQ). 2 disordered regions span residues 1-20 (MQRV…QCPS) and 136-157 (PPSE…KKLA). Residues 35 to 148 (QRLTEDAAAV…EAQTGPASRF (114 aa)) form the sHSP domain. Residues 148 to 157 (FRSRGSKKLA) are compositionally biased toward basic residues.

The protein belongs to the small heat shock protein (HSP20) family.

The protein localises to the cytoplasm. It localises to the nucleus. This is Heat shock protein beta-9 (HSPB9) from Bos taurus (Bovine).